A 297-amino-acid chain; its full sequence is Ribosomal protein L11 methyltransferase (297 aa).

S-adenosyl-L-methionine contacts are provided by T152, G173, D195, and N234.

This sequence belongs to the methyltransferase superfamily. PrmA family.

It localises to the cytoplasm. It catalyses the reaction L-lysyl-[protein] + 3 S-adenosyl-L-methionine = N(6),N(6),N(6)-trimethyl-L-lysyl-[protein] + 3 S-adenosyl-L-homocysteine + 3 H(+). In terms of biological role, methylates ribosomal protein L11. The sequence is that of Ribosomal protein L11 methyltransferase from Cupriavidus taiwanensis (strain DSM 17343 / BCRC 17206 / CCUG 44338 / CIP 107171 / LMG 19424 / R1) (Ralstonia taiwanensis (strain LMG 19424)).